Reading from the N-terminus, the 1397-residue chain is MAARSPSSSPPPPPVRRSSRRSLRVGRGAEVHAVRSEASGLAGAAREVVADKSDLLWRGEEGSGGRRGSGRAGAAVAPVASAPAGSWWPEGLSSEEAKATRSQLLEEELSSLKEELALCQADKEFVWSLWRRLQATNPDLTQTVSLVVEREKQKSEAKDRKVLEILQVKDSKIQELEQTESVLKQELHDLVKLKTLVDEENAFLRKELCDLQKKFKDKSQEVKDAKECVQSKEEQNRLVIKNLEEENERLRTRCTDLLNDLEKLRNQEAHWRKEKHSVDTRVKVLEENLIEAKKEIESAQTKYNVVSQQLNNKQAELLQKDMDITLIRKELQELQNVYKQNSAHTAQQADLIQQLQALNMDTQKVLRNQEDVHTAESMSYQKLYNELHMCFETTKSNEVMLRQSVVNLQGQLFQKEQENVKLKEKLEESQGTAPSLSPHDSDSSHSGKAPLSTLETLMISQKSEIEYLQKKLKVANEKLMANRSCDQDFSEKGTEGKHKEPPVKRSRSLSPKSSFMGSEELRKLKKAERKIENLEKTLQLKSQENDELRDAHEKRKERLQMLHTNYRAVKEQLKQWEEDSGMAESRQMKRAEPHQLRQEDSDAVWNELAYFKRENQELMVQKMTLQDELDELKMHMSIDKTTIQELNRCMAEKREEQLFRQHEDAEVKKSTPEKNEKAISEETLQKVIELENRLKSFEKNSRKLKEESKRLKKENDFLKSHLKHYQEDSEAREKELEQLLRVSKDVEHDKSELQTKITALETEVTTLRRQVTEAKALRGKDEEVVCPEERAHRPTDKAKSEMATTDVRARRCDCKTATTKVKFKAAKRKCSVGRHHTVLNHSIKVMSHVENLSKDGWEDVSEGSSDSETQTFQNLGTIIVETSQNISPIEDGRNQKEIDQTEGSCAQQRAMQTYSCEDIKAPQSISHNKNTKKMTFQKKSGSLQKSLHSALPARVNREKCKNLPAQKSSSSTISLRERIVSLQQQNSLLQNARRAAEASAKEYKEANEKLLHQQQVSDHRFQTSRQTIKKLTLDLAELRKEKEDLLKKVESSSDIMSLAEEVSRIMAPQIKVTTLGPSRSMDLEMKQLQCKLKNATNELTKQSSNVKSLRMELLAKDDHIKEMHERTSRMERDITMKRHLIEDLKFRQKVNSESNESFNEMLETLEKKVKSLTEECSNKKVSVDSLKQRLNVAVKEKSQYEQMYQKTKEELEKKDLKMSVLISKLNDTETAMAQIETAASEQLQGLALQSEQVLEGAQKKLLSANEKIEEFTVFVKALVNELQSDVHGTRHQIRELKKMQKSRHACKTSTHKAQTLAASILNISRSDLEEILDTEDELEIEKTKIDIENDKEWMLYIQKLLEGQLPFASYLLEAVLEKIKENKKLTEGYFTVMKDTK.

Disordered regions lie at residues 1-43 (MAAR…GLAG) and 56-76 (LWRGEEGSGGRRGSGRAGAAV). N-acetylalanine is present on Ala-2. Residues Ser-5, Ser-9, and Ser-22 each carry the phosphoserine modification. Coiled coils occupy residues 95–126 (EEAKATRSQLLEEELSSLKEELALCQADKEFV) and 405–481 (VVNL…KLMA). Disordered regions lie at residues 422–449 (LKEKLEESQGTAPSLSPHDSDSSHSGKA) and 485–521 (CDQDFSEKGTEGKHKEPPVKRSRSLSPKSSFMGSEEL). Residues 485–503 (CDQDFSEKGTEGKHKEPPV) are compositionally biased toward basic and acidic residues. Coiled coils occupy residues 674–778 (KNEK…KALR), 973–1114 (ISLR…MELL), and 1152–1299 (SESN…LKKM). Ser-1219 is subject to Phosphoserine. Thr-1334 bears the Phosphothreonine mark.

Interacts with CEP250 and CEP68. Interacts with NEK2; the interaction leads to phosphorylation of CNTLN. In terms of processing, phosphorylated directly or indirectly by NEK2.

The protein resides in the cytoplasm. The protein localises to the cytoskeleton. It localises to the microtubule organizing center. It is found in the centrosome. Its subcellular location is the centriole. In terms of biological role, required for centrosome cohesion and recruitment of CEP68 to centrosomes. This is Centlein from Mus musculus (Mouse).